Consider the following 328-residue polypeptide: MKKASIISVGAYIPKDILTNFDLEKMVDTSDEWIVKRTGIKTRHLAKNEVTSDLAYKAALMAIQRAGIDKNDIDAVICATITPDYFCMPSTACKVASNLGLFDVTAFDISAACTGFIYLLEIAKSLVESGAKKNVLIIGAEKLSSIINWQDRSTCVLFGDGAGAAIVSSSDDNYIIDVHTSSDGSKGNLLITPGCGIVHPANKDTIDKKLNFLHMSGNEVFKIAVNTLAKDVVDILEKNSVSSKDIDLFIPHQANLRIIEAVKQRLDFTDEQCVVTVVDYGNTSSASIPMAMNDAYEDGRLKQGSLILLDAFGGGFTWGSALLRFGGK.

Active-site residues include Cys113 and His252. Positions 253 to 257 (QANLR) are ACP-binding. Residue Asn282 is part of the active site.

The protein belongs to the thiolase-like superfamily. FabH family. Homodimer.

The protein resides in the cytoplasm. It catalyses the reaction malonyl-[ACP] + acetyl-CoA + H(+) = 3-oxobutanoyl-[ACP] + CO2 + CoA. The protein operates within lipid metabolism; fatty acid biosynthesis. Catalyzes the condensation reaction of fatty acid synthesis by the addition to an acyl acceptor of two carbons from malonyl-ACP. Catalyzes the first condensation reaction which initiates fatty acid synthesis and may therefore play a role in governing the total rate of fatty acid production. Possesses both acetoacetyl-ACP synthase and acetyl transacylase activities. Its substrate specificity determines the biosynthesis of branched-chain and/or straight-chain of fatty acids. This Campylobacter fetus subsp. fetus (strain 82-40) protein is Beta-ketoacyl-[acyl-carrier-protein] synthase III.